Reading from the N-terminus, the 752-residue chain is ATP-dependent RNA helicase DRS1 (752 aa).

Disordered stretches follow at residues 1–61 (MVVG…NLDE) and 119–223 (GLVK…TEGD). Acidic residues predominate over residues 19-34 (DSEDDVPILDSSDDEK). Positions 40–51 (TTKKRKGKNNKK) are enriched in basic residues. Over residues 124–142 (AHIDSKQEEETEKEKVEKE) the composition is skewed to basic and acidic residues. Acidic residues-rich tracts occupy residues 167–191 (NQSEEEEEEEEKEEEEEEEEEQEEM) and 200–209 (DEIDEEDDSE). Ser208 carries the phosphoserine modification. A Q motif motif is present at residues 231-259 (ENFNSLSLSRPVLKGLASLGYVKPSPIQS). Residues 262 to 437 (IPIALLGKDI…SLSLKKPVRI (176 aa)) form the Helicase ATP-binding domain. Residue 275–282 (AVTGSGKT) coordinates ATP. Residues 385–388 (DEAD) carry the DEAD box motif. A Helicase C-terminal domain is found at 448–639 (KLTQEFVRIR…SMNDTIEDIL (192 aa)). Positions 621–667 (IEETNKLVESMNDTIEDILVEEKEEKEILRAEMQLRKGENMLKHKKE) form a coiled coil. Residues 673–752 (RRTWFQSESD…NKKKGFKSRR (80 aa)) are disordered. A compositionally biased stretch (basic residues) spans 694–705 (RNKKVTNSKKRK). Residues 722–734 (TKTDRIADQERTF) show a composition bias toward basic and acidic residues. Residues 735-752 (KKQKSTNSNKKKGFKSRR) show a composition bias toward basic residues.

The protein belongs to the DEAD box helicase family. DDX27/DRS1 subfamily. As to quaternary structure, interacts with RRP1 and associates with pre-ribosomal particles.

The protein resides in the nucleus. It localises to the nucleolus. The catalysed reaction is ATP + H2O = ADP + phosphate + H(+). ATP-binding RNA helicase involved in ribosome assembly. This Saccharomyces cerevisiae (strain ATCC 204508 / S288c) (Baker's yeast) protein is ATP-dependent RNA helicase DRS1 (DRS1).